The following is a 914-amino-acid chain: Isoleucine--tRNA ligase (914 aa).

Residues 57–67 (PYANGQIHMGH) carry the 'HIGH' region motif. Glu-554 serves as a coordination point for L-isoleucyl-5'-AMP. The 'KMSKS' region motif lies at 595-599 (KMSKS). Lys-598 contacts ATP. 4 residues coordinate Zn(2+): Cys-883, Cys-886, Cys-904, and Cys-907.

This sequence belongs to the class-I aminoacyl-tRNA synthetase family. IleS type 1 subfamily. As to quaternary structure, monomer. Zn(2+) is required as a cofactor.

It localises to the cytoplasm. It catalyses the reaction tRNA(Ile) + L-isoleucine + ATP = L-isoleucyl-tRNA(Ile) + AMP + diphosphate. In terms of biological role, catalyzes the attachment of isoleucine to tRNA(Ile). As IleRS can inadvertently accommodate and process structurally similar amino acids such as valine, to avoid such errors it has two additional distinct tRNA(Ile)-dependent editing activities. One activity is designated as 'pretransfer' editing and involves the hydrolysis of activated Val-AMP. The other activity is designated 'posttransfer' editing and involves deacylation of mischarged Val-tRNA(Ile). This chain is Isoleucine--tRNA ligase, found in Macrococcus caseolyticus (strain JCSC5402) (Macrococcoides caseolyticum).